A 419-amino-acid chain; its full sequence is L-cysteine:1D-myo-inositol 2-amino-2-deoxy-alpha-D-glucopyranoside ligase (419 aa).

Positions 1–20 are disordered; sequence MRSWSVPEVPALPGRGPRVH. C44 is a binding site for Zn(2+). Residues 44–47, T59, and 82–84 contribute to the L-cysteinyl-5'-AMP site; these read CGIT and NVT. Positions 46–56 match the 'HIGH' region motif; sequence ITPYDATHLGH. The 'ERGGDP' region motif lies at 191-196; it reads ERGGDP. L-cysteinyl-5'-AMP is bound at residue W232. A Zn(2+)-binding site is contributed by C236. An L-cysteinyl-5'-AMP-binding site is contributed by 254 to 256; the sequence is GSD. H261 provides a ligand contact to Zn(2+). V289 contacts L-cysteinyl-5'-AMP. The 'KMSKS' region motif lies at 295–299; that stretch reads KMSKS.

This sequence belongs to the class-I aminoacyl-tRNA synthetase family. MshC subfamily. As to quaternary structure, monomer. The cofactor is Zn(2+).

It catalyses the reaction 1D-myo-inositol 2-amino-2-deoxy-alpha-D-glucopyranoside + L-cysteine + ATP = 1D-myo-inositol 2-(L-cysteinylamino)-2-deoxy-alpha-D-glucopyranoside + AMP + diphosphate + H(+). In terms of biological role, catalyzes the ATP-dependent condensation of GlcN-Ins and L-cysteine to form L-Cys-GlcN-Ins. This chain is L-cysteine:1D-myo-inositol 2-amino-2-deoxy-alpha-D-glucopyranoside ligase, found in Kineococcus radiotolerans (strain ATCC BAA-149 / DSM 14245 / SRS30216).